The primary structure comprises 212 residues: ER lumen protein-retaining receptor 1 (212 aa).

At 1–4 (MNIF) the chain is on the lumenal side. The chain crosses the membrane as a helical span at residues 5–24 (RFLGDISHLSAILILLLKIW). The Cytoplasmic segment spans residues 25–32 (KSRSCAGI). Residues 33–52 (SGKSQLLFAIVFTTRYLDLF) traverse the membrane as a helical segment. An interaction with the K-D-E-L motif on target proteins region spans residues 47 to 48 (RY). The Lumenal portion of the chain corresponds to 53–58 (TNFISL). A helical transmembrane segment spans residues 59-79 (YNTSMKMVYVASSYATIWMIY). Residues 80–92 (SKFKATYDGNHDT) lie on the Cytoplasmic side of the membrane. A helical membrane pass occupies residues 93 to 110 (FRVEFLIVPTAILAFLVN). The Lumenal segment spans residues 111 to 116 (HDFTPL). The chain crosses the membrane as a helical span at residues 117-135 (EILWTFSIYLESVAILPQL). Topologically, residues 136–149 (FMVSKTGEAETITS) are cytoplasmic. The helical transmembrane segment at 150-168 (HYLFALGIYRALYLFNWIW) threads the bilayer. Residues 159 to 169 (RALYLFNWIWR) are interaction with the K-D-E-L motif on target proteins. The Lumenal portion of the chain corresponds to 169–178 (RYQFEGFFDL). Residues 179–199 (IAIVAGLVQTVLYCDFFYLYI) traverse the membrane as a helical segment. Over 200–212 (TKVLKGKKLSLPA) the chain is Cytoplasmic. Residues 204 to 207 (KGKK) form an important for recycling of cargo proteins with the sequence motif K-D-E-L from the Golgi to the endoplasmic reticulum region.

The protein belongs to the ERD2 family.

The protein resides in the golgi apparatus membrane. Its subcellular location is the cytoplasmic vesicle. It localises to the COPI-coated vesicle membrane. It is found in the endoplasmic reticulum membrane. The protein localises to the endoplasmic reticulum-Golgi intermediate compartment membrane. Its function is as follows. Receptor for the C-terminal sequence motif K-D-E-L that is present on endoplasmic reticulum resident proteins and that mediates their recycling from the Golgi back to the endoplasmic reticulum. This chain is ER lumen protein-retaining receptor 1 (kdelr1), found in Xenopus tropicalis (Western clawed frog).